The chain runs to 180 residues: Inner membrane-spanning protein YciB (180 aa).

Helical transmembrane passes span Ile-10–Met-30, Ile-47–Leu-67, Ile-74–Ile-94, Tyr-121–Trp-141, and Val-151–His-171.

Belongs to the YciB family.

It is found in the cell inner membrane. Its function is as follows. Plays a role in cell envelope biogenesis, maintenance of cell envelope integrity and membrane homeostasis. This Idiomarina loihiensis (strain ATCC BAA-735 / DSM 15497 / L2-TR) protein is Inner membrane-spanning protein YciB.